We begin with the raw amino-acid sequence, 32 residues long: Ferredoxin (32 aa).

The 2Fe-2S ferredoxin-type domain occupies 3 to 32 (YKVRLLSEAEGIDVTIDCADDVYILDAAEE).

It belongs to the 2Fe2S plant-type ferredoxin family. [2Fe-2S] cluster serves as cofactor.

Its subcellular location is the plastid. The protein localises to the chloroplast. Ferredoxins are iron-sulfur proteins that transfer electrons in a wide variety of metabolic reactions. This is Ferredoxin from Porphyridium purpureum (Red alga).